Reading from the N-terminus, the 402-residue chain is Eukaryotic initiation factor 4A (402 aa).

A Q motif motif is present at residues 29 to 57; it reads ESFDDMELKEELLRGIYGFGFEKPSAIQK. The 171-residue stretch at 60–230 folds into the Helicase ATP-binding domain; it reads IVPCTTGKDV…NRFMRNPIRI (171 aa). 73–80 lines the ATP pocket; it reads AQSGTGKT. Positions 178–181 match the DEAD box motif; it reads DEAD. Residues 241–402 form the Helicase C-terminal domain; that stretch reads GIRQFYINVQ…EMPESIADLI (162 aa).

It belongs to the DEAD box helicase family. eIF4A subfamily. As to quaternary structure, eIF4F is a multi-subunit complex, the composition of which varies with external and internal environmental conditions. It is composed of at least EIF4A, EIF4E and EIF4G.

It catalyses the reaction ATP + H2O = ADP + phosphate + H(+). Functionally, ATP-dependent RNA helicase which is a subunit of the eIF4F complex involved in cap recognition and is required for mRNA binding to ribosome. In the current model of translation initiation, eIF4A unwinds RNA secondary structures in the 5'-UTR of mRNAs which is necessary to allow efficient binding of the small ribosomal subunit, and subsequent scanning for the initiator codon. This chain is Eukaryotic initiation factor 4A (inf-1), found in Caenorhabditis elegans.